The sequence spans 432 residues: Adenylosuccinate synthetase (432 aa).

Residues 13-19 (GDEGKGK) and 41-43 (GHT) each bind GTP. D14 acts as the Proton acceptor in catalysis. D14 and G41 together coordinate Mg(2+). IMP-binding positions include 14 to 17 (DEGK), 39 to 42 (NAGH), T130, R144, Q225, T240, and R304. H42 serves as the catalytic Proton donor. 300–306 (AVTGRPR) is a substrate binding site. Residues R306, 332 to 334 (KLD), and 415 to 417 (STG) each bind GTP.

Belongs to the adenylosuccinate synthetase family. Homodimer. Mg(2+) is required as a cofactor.

It is found in the cytoplasm. It catalyses the reaction IMP + L-aspartate + GTP = N(6)-(1,2-dicarboxyethyl)-AMP + GDP + phosphate + 2 H(+). The protein operates within purine metabolism; AMP biosynthesis via de novo pathway; AMP from IMP: step 1/2. In terms of biological role, plays an important role in the de novo pathway of purine nucleotide biosynthesis. Catalyzes the first committed step in the biosynthesis of AMP from IMP. This is Adenylosuccinate synthetase from Actinobacillus succinogenes (strain ATCC 55618 / DSM 22257 / CCUG 43843 / 130Z).